Reading from the N-terminus, the 495-residue chain is MTIGYIIGSATINEATAILEQKIRAGYYVILEYDGDKILGLITNVYTGSPLLDDNLNDVKFVQRIKQLEANKIPFFIKARIKLLCKLDGKFTQPDLPPVAGTPVRLASDEELSTVFSAGDVRIGKLIGSNVEVKIRLNPLSRHLAILAATGSGKSNTVAILSQRLVEIGGSILIFDYHGEYYDSTLPNLNIIEPKLNPLYLSVNEFATLLEIRENANIQYRIIRRTFNQLKEEINNEIKEGKTSLAELNSNFFERLKVKIEEEGRNEKRKESKDEVLNKVEDFAERYSDIIDITFGDVINKIKLGKINVVNLSSLDEDAIDAIVAHYLRRILTSRKENKIKKDSGLKFPILTVVEEAHVLLSKDTNTLTKKWAGRIAREGRKFGVGLIIVSQRPKGLDENILSQMTNKIILKIVEPSDKKYVLETSDNLSEDLADGLSSLDTGEAIIIGNVVKLPTIIKIDKFEGKLSGSDPNLTEEWKRAKEEEIVHSDVSDWG.

ATP contacts are provided by residues Arg142, 151 to 156 (GSGKSN), and 459 to 460 (KI).

This sequence belongs to the HerA family. In terms of assembly, interacts with Rad50 and Mre11.

The catalysed reaction is Couples ATP hydrolysis with the unwinding of duplex DNA at the replication fork by translocating in the 5'-3' direction. This creates two antiparallel DNA single strands (ssDNA). The leading ssDNA polymer is the template for DNA polymerase III holoenzyme which synthesizes a continuous strand.. It catalyses the reaction ATP + H2O = ADP + phosphate + H(+). It carries out the reaction Couples ATP hydrolysis with the unwinding of duplex DNA by translocating in the 3'-5' direction.. With respect to regulation, ATPase activity is slightly stimulated by either circular single- or double-stranded (ds)DNA with a weak preference for dsDNA. Involved in DNA double-strand break (DSB) repair. Probably acts with NurA to stimulate resection of the 5' strand and produce the long 3' single-strand that is required for RadA loading. Has DNA-dependent ATPase activity and bidirectional DNA helicase activity. Loads on either a 3' or a 5' DNA tail for subsequent DNA unwinding; has no activity on blunt-end DNA. The chain is DNA double-strand break repair helicase HerA from Sulfolobus acidocaldarius (strain ATCC 33909 / DSM 639 / JCM 8929 / NBRC 15157 / NCIMB 11770).